The following is a 98-amino-acid chain: NADH-ubiquinone oxidoreductase chain 4L (98 aa).

3 helical membrane-spanning segments follow: residues 1–21 (MSMVYINIFLAFILSLMGMLV), 29–49 (SLLCLEGMMLSLFVMMSVTIL), and 61–81 (IVLLVFAACEAALGLSLLVMV).

This sequence belongs to the complex I subunit 4L family. Core subunit of respiratory chain NADH dehydrogenase (Complex I) which is composed of 45 different subunits.

The protein localises to the mitochondrion inner membrane. It carries out the reaction a ubiquinone + NADH + 5 H(+)(in) = a ubiquinol + NAD(+) + 4 H(+)(out). Functionally, core subunit of the mitochondrial membrane respiratory chain NADH dehydrogenase (Complex I) which catalyzes electron transfer from NADH through the respiratory chain, using ubiquinone as an electron acceptor. Part of the enzyme membrane arm which is embedded in the lipid bilayer and involved in proton translocation. The polypeptide is NADH-ubiquinone oxidoreductase chain 4L (MT-ND4L) (Canis latrans (Coyote)).